Consider the following 425-residue polypeptide: WD repeat-containing protein JIP5 (425 aa).

5 WD repeats span residues 9–48 (QLDS…SDDS), 71–110 (RHKG…VTAK), 117–158 (LANG…AKSA), 219–262 (ELLS…DQDE), and 321–358 (LRQE…DVPE). Residues 354–425 (QDVPEDDEDE…HGILHFSGLA (72 aa)) form a disordered region. Acidic residues-rich tracts occupy residues 356 to 368 (VPED…EEEA) and 378 to 396 (SDED…EDDE). Basic residues predominate over residues 399 to 414 (QKRKKRRKGKGGKQAK).

The protein belongs to the WD repeat WDR55 family.

The protein resides in the nucleus. Its subcellular location is the nucleolus. The protein is WD repeat-containing protein JIP5 (JIP5) of Phaeosphaeria nodorum (strain SN15 / ATCC MYA-4574 / FGSC 10173) (Glume blotch fungus).